Here is a 94-residue protein sequence, read N- to C-terminus: Mitochondrial import inner membrane translocase subunit Tim8 A (94 aa).

Positions 47-70 match the Twin CX3C motif motif; that stretch reads CWDKCIDRPGNKLDSRTESCLVSC. Disulfide bonds link cysteine 47–cysteine 70 and cysteine 51–cysteine 66.

Belongs to the small Tim family. As to quaternary structure, heterohexamer; composed of 3 copies of TIMM8A and 3 copies of TIMM13, named soluble 70 kDa complex. Associates with the TIM22 complex, whose core is composed of TIMM22.

The protein resides in the mitochondrion inner membrane. Mitochondrial intermembrane chaperone that participates in the import and insertion of some multi-pass transmembrane proteins into the mitochondrial inner membrane. Also required for the transfer of beta-barrel precursors from the TOM complex to the sorting and assembly machinery (SAM complex) of the outer membrane. Acts as a chaperone-like protein that protects the hydrophobic precursors from aggregation and guide them through the mitochondrial intermembrane space. The TIMM8-TIMM13 complex mediates the import of some proteins while the predominant TIMM9-TIMM10 70 kDa complex mediates the import of much more proteins. The protein is Mitochondrial import inner membrane translocase subunit Tim8 A (timm8a) of Xenopus laevis (African clawed frog).